The primary structure comprises 622 residues: Polypeptide N-acetylgalactosaminyltransferase 6 (622 aa).

Residues 1–8 (MRLLRRRH) lie on the Cytoplasmic side of the membrane. The chain crosses the membrane as a helical; Signal-anchor for type II membrane protein span at residues 9 to 28 (MPLRLAMVGCAFVLFLFLLH). The Lumenal segment spans residues 29-622 (RDVSSREEAT…SDPHQLWLFV (594 aa)). N86 carries N-linked (GlcNAc...) asparagine glycosylation. Cystine bridges form between C165–C402 and C393–C474. The catalytic subdomain A stretch occupies residues 176–285 (LATTSVIIVF…HGWLEPLLAR (110 aa)). Residues D269, H271, and H407 each coordinate Mn(2+). Positions 348–410 (PIKSPTFAGG…PCSVVGHVFR (63 aa)) are catalytic subdomain B. N-linked (GlcNAc...) asparagine glycosylation occurs at N476. One can recognise a Ricin B-type lectin domain in the interval 506–622 (TNQCLDVGEN…SDPHQLWLFV (117 aa)). C509 and C527 are oxidised to a cystine. UDP-N-acetyl-alpha-D-galactosamine-binding residues include D511, E514, H528, and N533. 2 disulfide bridges follow: C553–C566 and C597–C610.

It belongs to the glycosyltransferase 2 family. GalNAc-T subfamily. It depends on Mn(2+) as a cofactor. In terms of tissue distribution, expressed in placenta and trachea. Weakly expressed in brain and pancreas. Expressed in fibroblast. Weakly or not expressed in lung, liver, muscle, kidney, spleen, thymus, prostate, testis, ovary, intestine, colon, leukocyte, stomach, thyroid, spinal cord, lymph node, trachea, adrenal gland and bone marrow.

It localises to the golgi apparatus membrane. The catalysed reaction is L-seryl-[protein] + UDP-N-acetyl-alpha-D-galactosamine = a 3-O-[N-acetyl-alpha-D-galactosaminyl]-L-seryl-[protein] + UDP + H(+). It carries out the reaction L-threonyl-[protein] + UDP-N-acetyl-alpha-D-galactosamine = a 3-O-[N-acetyl-alpha-D-galactosaminyl]-L-threonyl-[protein] + UDP + H(+). The protein operates within protein modification; protein glycosylation. Functionally, catalyzes the initial reaction in O-linked oligosaccharide biosynthesis, the transfer of an N-acetyl-D-galactosamine residue to a serine or threonine residue on the protein receptor. May participate in synthesis of oncofetal fibronectin. Has activity toward MUC1A, MUC2, EA2 and fibronectin peptides. Glycosylates FGF23. This Homo sapiens (Human) protein is Polypeptide N-acetylgalactosaminyltransferase 6 (GALNT6).